Reading from the N-terminus, the 291-residue chain is Ribose-phosphate pyrophosphokinase (291 aa).

Residues 34–36 and 93–94 each bind ATP; these read DGE and RQ. Mg(2+) is bound by residues His-127 and Asp-165. Residue Lys-188 is part of the active site. Residues Arg-190, Asp-216, and 220–224 contribute to the D-ribose 5-phosphate site; that span reads STGGT.

The protein belongs to the ribose-phosphate pyrophosphokinase family. Class III (archaeal) subfamily. Requires Mg(2+) as cofactor.

The protein localises to the cytoplasm. It carries out the reaction D-ribose 5-phosphate + ATP = 5-phospho-alpha-D-ribose 1-diphosphate + AMP + H(+). It participates in metabolic intermediate biosynthesis; 5-phospho-alpha-D-ribose 1-diphosphate biosynthesis; 5-phospho-alpha-D-ribose 1-diphosphate from D-ribose 5-phosphate (route I): step 1/1. Involved in the biosynthesis of the central metabolite phospho-alpha-D-ribosyl-1-pyrophosphate (PRPP) via the transfer of pyrophosphoryl group from ATP to 1-hydroxyl of ribose-5-phosphate (Rib-5-P). The polypeptide is Ribose-phosphate pyrophosphokinase (Sulfurisphaera tokodaii (strain DSM 16993 / JCM 10545 / NBRC 100140 / 7) (Sulfolobus tokodaii)).